Consider the following 131-residue polypeptide: Fumarate reductase subunit C (131 aa).

Transmembrane regions (helical) follow at residues Glu30–Leu50, Phe63–His83, and Ile109–Leu129.

It belongs to the FrdC family. As to quaternary structure, part of an enzyme complex containing four subunits: a flavoprotein (FrdA), an iron-sulfur protein (FrdB), and two hydrophobic anchor proteins (FrdC and FrdD).

Its subcellular location is the cell inner membrane. In terms of biological role, two distinct, membrane-bound, FAD-containing enzymes are responsible for the catalysis of fumarate and succinate interconversion; fumarate reductase is used in anaerobic growth, and succinate dehydrogenase is used in aerobic growth. Anchors the catalytic components of the fumarate reductase complex to the cell inner membrane, binds quinones. The chain is Fumarate reductase subunit C from Shigella boydii serotype 18 (strain CDC 3083-94 / BS512).